A 378-amino-acid polypeptide reads, in one-letter code: Dof zinc finger protein 1 (378 aa).

Residues 28 to 38 show a composition bias toward low complexity; that stretch reads GANPNPAATAP. The tract at residues 28–79 is disordered; sequence GANPNPAATAPSSVTGGALRGGGGGGAPPVAGGAGAGSTERRARPQKEKALN. Positions 45 to 63 are enriched in gly residues; it reads ALRGGGGGGAPPVAGGAGA. The span at 66-77 shows a compositional bias: basic and acidic residues; sequence TERRARPQKEKA. A Dof-type zinc finger spans residues 78–132; that stretch reads LNCPRCNSTNTKFCYYNNYSLQQPRYFCKTCRRYWTEGGSLRNVPVGGGSRKNKR. Zn(2+) is bound by residues Cys-80, Cys-83, Cys-105, and Cys-108. Disordered stretches follow at residues 116–148, 203–222, and 316–378; these read GSLRNVPVGGGSRKNKRSSSSAASASPASASTA, SLESSSVCNPGGPMGTNGRG, and LKPT…GTSW. Residues 133–148 are compositionally biased toward low complexity; the sequence is SSSSAASASPASASTA. Composition is skewed to gly residues over residues 323–338, 350–361, and 369–378; these read GTGGGGASGGGAGVDG, AGGGGGGPGGHD, and MIGGGSGTSW.

The protein localises to the nucleus. Functionally, transcription factor that may transactivate seed storage protein genes in developing seeds. The protein is Dof zinc finger protein 1 of Oryza sativa subsp. japonica (Rice).